Reading from the N-terminus, the 287-residue chain is MKRLSALLLTCLLSAVSSLSALAADADPDVLKVALLPDENASELIKRNQPLKDYLEEHLDKKVQLIVTTDYSSMIEAMRFGRIDLAYFGPLSYVMAKSKSDIEPFAAMVIDGKPTYRSVIIANVASGVNEYADLKGKRMAYGDRASTSSHLIPKTVLLETADLTGGQDYEQHFVGTHDAVAVNVANGNADAGGLSEVIFNHAAERGLIDPSKVKVLGYSGEYPQYPWAMRSNLSPELKTKVRDVFVGIDDPEVLRNFKAEAFAPITDADYDVIRNMGSLLGLDFATM.

An N-terminal signal peptide occupies residues 1-23 (MKRLSALLLTCLLSAVSSLSALA).

Belongs to the phosphate/phosphite/phosphonate binding protein family.

Functionally, probably forms part of a binding-protein-dependent phosphite transporter. Required for oxidation of phosphite to phosphate. This chain is Probable phosphite transport system-binding protein PtxB (ptxB), found in Stutzerimonas stutzeri (Pseudomonas stutzeri).